Reading from the N-terminus, the 88-residue chain is Toxin ICK-12 (88 aa).

A signal peptide spans 1 to 19 (MKSIVYMLLFCTFTVVILG). Cystine bridges form between Cys41–Cys55, Cys41–Cys78, Cys54–Cys67, and Cys81–Cys88.

This sequence belongs to the neurotoxin 27 (Jztx-72) family. ICK-41 subfamily. In terms of tissue distribution, expressed by the venom gland.

It localises to the secreted. Probable neurotoxin with ion channel impairing activity. The protein is Toxin ICK-12 of Trittame loki (Brush-footed trapdoor spider).